The sequence spans 406 residues: Arginine deiminase (406 aa).

Cys-396 acts as the Amidino-cysteine intermediate in catalysis.

The protein belongs to the arginine deiminase family.

Its subcellular location is the cytoplasm. It catalyses the reaction L-arginine + H2O = L-citrulline + NH4(+). It functions in the pathway amino-acid degradation; L-arginine degradation via ADI pathway; carbamoyl phosphate from L-arginine: step 1/2. This Vibrio vulnificus (strain CMCP6) protein is Arginine deiminase.